A 188-amino-acid chain; its full sequence is Elongation factor P (188 aa).

It belongs to the elongation factor P family.

Its subcellular location is the cytoplasm. It participates in protein biosynthesis; polypeptide chain elongation. Functionally, involved in peptide bond synthesis. Stimulates efficient translation and peptide-bond synthesis on native or reconstituted 70S ribosomes in vitro. Probably functions indirectly by altering the affinity of the ribosome for aminoacyl-tRNA, thus increasing their reactivity as acceptors for peptidyl transferase. The chain is Elongation factor P from Pelodictyon phaeoclathratiforme (strain DSM 5477 / BU-1).